The following is a 181-amino-acid chain: Translationally-controlled tumor protein homolog (181 aa).

In terms of domain architecture, TCTP spans 1-181; sequence MLIYKDIFTD…VKEAILEEKC (181 aa).

This sequence belongs to the TCTP family.

The protein resides in the cytoplasm. Functionally, involved in calcium binding and microtubule stabilization. This Caenorhabditis briggsae protein is Translationally-controlled tumor protein homolog (tct-1).